A 178-amino-acid chain; its full sequence is Fatty-acid and retinol-binding protein 1 (178 aa).

The first 16 residues, 1-16, serve as a signal peptide directing secretion; sequence MYHRLILLALIGTTMA. Coiled-coil stretches lie at residues 67–89 and 130–153; these read DAAL…ELRN and KQAA…ELKV.

Belongs to the fatty-acid and retinol-binding protein (FARBP) family. In terms of processing, not glycosylated.

The protein localises to the secreted. In terms of biological role, binds retinol and different fatty acids. The polypeptide is Fatty-acid and retinol-binding protein 1 (Wuchereria bancrofti).